Reading from the N-terminus, the 382-residue chain is Intermediate transcription factor 3 large subunit (382 aa).

It belongs to the poxviruses A23 family. As to quaternary structure, heterodimer of a 45 kDa and a 32 kDa subunit.

Acts with RNA polymerase to initiate transcription from intermediate gene promoters. The chain is Intermediate transcription factor 3 large subunit (VITF3L) from Ectromelia virus (strain Moscow) (ECTV).